The sequence spans 156 residues: ATP synthase subunit b (156 aa).

A helical membrane pass occupies residues 7-26 (LIGQAIWFALFIWITMKYVW).

It belongs to the ATPase B chain family. In terms of assembly, F-type ATPases have 2 components, F(1) - the catalytic core - and F(0) - the membrane proton channel. F(1) has five subunits: alpha(3), beta(3), gamma(1), delta(1), epsilon(1). F(0) has three main subunits: a(1), b(2) and c(10-14). The alpha and beta chains form an alternating ring which encloses part of the gamma chain. F(1) is attached to F(0) by a central stalk formed by the gamma and epsilon chains, while a peripheral stalk is formed by the delta and b chains.

It localises to the cell inner membrane. In terms of biological role, f(1)F(0) ATP synthase produces ATP from ADP in the presence of a proton or sodium gradient. F-type ATPases consist of two structural domains, F(1) containing the extramembraneous catalytic core and F(0) containing the membrane proton channel, linked together by a central stalk and a peripheral stalk. During catalysis, ATP synthesis in the catalytic domain of F(1) is coupled via a rotary mechanism of the central stalk subunits to proton translocation. Its function is as follows. Component of the F(0) channel, it forms part of the peripheral stalk, linking F(1) to F(0). The chain is ATP synthase subunit b from Dechloromonas aromatica (strain RCB).